A 213-amino-acid chain; its full sequence is Dimethylamine corrinoid protein 1 (213 aa).

Residues 1-90 (MSKEELLQEL…LMPEGSASSK (90 aa)) form the B12-binding N-terminal domain. Positions 91 to 213 (MGVIVNGTVE…AVAKAKELLA (123 aa)) constitute a B12-binding domain. Histidine 104 provides a ligand contact to methylcob(III)alamin.

It belongs to the methylamine corrinoid protein family.

It functions in the pathway one-carbon metabolism; methanogenesis from dimethylamine. Acts as a methyl group carrier between MtbB and MtbA. The polypeptide is Dimethylamine corrinoid protein 1 (mtbC1) (Methanosarcina acetivorans (strain ATCC 35395 / DSM 2834 / JCM 12185 / C2A)).